Reading from the N-terminus, the 105-residue chain is Saimiri transformation-associated protein (105 aa).

Over 1–75 (MASEPNLRYP…GPPGPSGLPG (75 aa)) the chain is Cytoplasmic. Residues 1–75 (MASEPNLRYP…GPPGPSGLPG (75 aa)) are disordered. Positions 15-74 (GDRGPQGPPGPPGPQGPPGPQGPPGPQGPPGPQGPPGPQGPPGPQGPPGPPGPPGPSGLP) constitute a Collagen-like domain. A compositionally biased stretch (pro residues) spans 20-71 (QGPPGPPGPQGPPGPQGPPGPQGPPGPQGPPGPQGPPGPQGPPGPPGPPGPS). Residues 76 to 96 (LFVTNLLLGIIILLLLIIVAI) form a helical membrane-spanning segment. Over 97–105 (LLVSKLVVN) the chain is Extracellular.

Binds to host RAS and TRAF2.

The protein localises to the host membrane. Its function is as follows. Acts synergistically with Tip to stimulate NF-kappa-B activity and interleukin-2 gene expression by binding to host TRAF proteins. Activation of NF-kappa-B protects lymphocytes from apoptosis, thereby facilitating viral induced cell transformation. The protein is Saimiri transformation-associated protein of Saimiriine herpesvirus 2 (strain 484-77) (SaHV-2).